We begin with the raw amino-acid sequence, 624 residues long: Bifunctional 3'-phosphoadenosine 5'-phosphosulfate synthase 1 (624 aa).

N-acetylmethionine is present on methionine 1. Positions 1–225 are adenylyl-sulfate kinase; sequence MEIPGSLCKK…VVELLQERDI (225 aa). Lysine 12 is subject to N6-acetyllysine. Position 62–67 (62–67) interacts with ATP; the sequence is GAGKTT. Adenosine 5'-phosphosulfate-binding positions include 89-92, phenylalanine 101, 106-109, 132-133, lysine 171, and 184-185; these read DNIR, REEN, IS, and GF. ATP-binding positions include cysteine 207, cysteine 212, 419–422, 521–525, and alanine 563; these read QLRN and GRDPA. A sulfate adenylyltransferase region spans residues 234 to 624; the sequence is VKELYVPENK…TEYYKSLEKA (391 aa).

It in the N-terminal section; belongs to the APS kinase family. The protein in the C-terminal section; belongs to the sulfate adenylyltransferase family. As to quaternary structure, homodimer. As to expression, expressed in testis, pancreas, kidney, thymus, prostate, ovary, small intestine, colon, leukocytes and liver. Also expressed in high endothelial venules (HEV) cells and in cartilage.

The catalysed reaction is sulfate + ATP + H(+) = adenosine 5'-phosphosulfate + diphosphate. It catalyses the reaction adenosine 5'-phosphosulfate + ATP = 3'-phosphoadenylyl sulfate + ADP + H(+). It participates in sulfur metabolism; sulfate assimilation. Its activity is regulated as follows. Inhibited by chlorate. The kinase activity is subject to inhibition by the substrate adenylyl sulfate. Its function is as follows. Bifunctional enzyme with both ATP sulfurylase and APS kinase activity, which mediates two steps in the sulfate activation pathway. The first step is the transfer of a sulfate group to ATP to yield adenosine 5'-phosphosulfate (APS), and the second step is the transfer of a phosphate group from ATP to APS yielding 3'-phosphoadenylylsulfate (PAPS: activated sulfate donor used by sulfotransferase). In mammals, PAPS is the sole source of sulfate; APS appears to be only an intermediate in the sulfate-activation pathway. Required for normal biosynthesis of sulfated L-selectin ligands in endothelial cells. The protein is Bifunctional 3'-phosphoadenosine 5'-phosphosulfate synthase 1 (PAPSS1) of Homo sapiens (Human).